The chain runs to 677 residues: MTQVAKKILVTCALPYANGSIHLGHMLEHIQADVWVRYQRMRGHEVNFICADDAHGTPIMLKAQQLGITPEQMIGEMSQEHQTDFAGFNISYDNYHSTHSEENRQLSELIYSRLKENGFIKNRTISQLYDPEKGMFLPDRFVKGTCPKCKSPDQYGDNCEVCGATYSPTELIEPKSVVSGATPVMRDSEHFFFDLPSFSEMLQAWTRSGALQEQVANKMQEWFESGLQQWDISRDAPYFGFEIPNAPGKYFYVWLDAPIGYMGSFKNLCDKRSDSVSFDEYWKKDSTAELYHFIGKDIVYFHSLFWPAMLEGSNFRKPTNLFVHGYVTVNGAKMSKSRGTFIKASTWLNHFDADSLRYYYTAKLSSRIDDIDLNLEDFVQRVNADIVNKVVNLASRNAGFINKRFDGVLASELADPQLYKTFTDAAEVIGEAWESREFGKAVREIMALADLANRYVDEQAPWVVAKQEGRDADLQAICSMGINLFRVLMTYLKPVLPKLTERAEAFLNTELTWDGIQQPLLGHKVNPFKALYNRIDMKQVEALVEASKEEVKAAAAPVTGPLADDPIQETITFDDFAKVDLRVALIENAEFVEGSDKLLRLTLDLGGEKRNVFSGIRSAYPDPQALIGRHTIMVANLAPRKMRFGISEGMVMAAGPGGKDIFLLSPDAGAKPGHQVK.

A 'HIGH' region motif is present at residues Pro15 to His25. Residues Cys146, Cys149, Cys159, and Cys162 each coordinate Zn(2+). The 'KMSKS' region motif lies at Lys333–Ser337. Lys336 serves as a coordination point for ATP. Positions Asp575–Lys677 constitute a tRNA-binding domain.

It belongs to the class-I aminoacyl-tRNA synthetase family. MetG type 1 subfamily. In terms of assembly, homodimer. Zn(2+) serves as cofactor.

The protein resides in the cytoplasm. The enzyme catalyses tRNA(Met) + L-methionine + ATP = L-methionyl-tRNA(Met) + AMP + diphosphate. Is required not only for elongation of protein synthesis but also for the initiation of all mRNA translation through initiator tRNA(fMet) aminoacylation. The protein is Methionine--tRNA ligase of Shigella sonnei (strain Ss046).